The following is a 746-amino-acid chain: Eukaryotic translation initiation factor 3 subunit B (746 aa).

The segment covering Met-1 to Ala-11 has biased composition (basic and acidic residues). The disordered stretch occupies residues Met-1–Glu-20. The RRM domain maps to Thr-42–Asp-128. 7 WD repeats span residues Asp-195–Arg-234, Pro-247–Ala-294, Pro-307–Lys-346, Ile-349–Asn-386, Thr-458–Pro-500, Leu-517–Glu-560, and Ala-575–Glu-620.

It belongs to the eIF-3 subunit B family. Component of the eukaryotic translation initiation factor 3 (eIF-3) complex.

Its subcellular location is the cytoplasm. RNA-binding component of the eukaryotic translation initiation factor 3 (eIF-3) complex, which is involved in protein synthesis of a specialized repertoire of mRNAs and, together with other initiation factors, stimulates binding of mRNA and methionyl-tRNAi to the 40S ribosome. The eIF-3 complex specifically targets and initiates translation of a subset of mRNAs involved in cell proliferation. The chain is Eukaryotic translation initiation factor 3 subunit B from Pyricularia oryzae (strain 70-15 / ATCC MYA-4617 / FGSC 8958) (Rice blast fungus).